Consider the following 509-residue polypeptide: Zinc finger CCCH-type with G patch domain-containing protein (509 aa).

The C3H1-type zinc-finger motif lies at 155–178 (PCNYYLEGECRFDEIRCRYSHGAL). The interval 253 to 277 (EEDGLTSEDSSSSPHDESSDEIDSD) is disordered. The 47-residue stretch at 310–356 (TRGIGSKLMEKMGYIHGTGLGSEGRGIVTPVSAQILPQGRSLDACME) folds into the G-patch domain. A disordered region spans residues 409–430 (GGESRHQGDQAAKKAKTNDLQQ). Residues 411 to 420 (ESRHQGDQAA) show a composition bias toward basic and acidic residues.

The protein localises to the nucleus. Transcription repressor. The polypeptide is Zinc finger CCCH-type with G patch domain-containing protein (Drosophila persimilis (Fruit fly)).